Reading from the N-terminus, the 53-residue chain is Metallothionein (53 aa).

The propeptide occupies 1 to 6; it reads MRVIRM. The Cu(+) site is built by C17, H19, C22, C24, C32, H33, C34, C43, and C45.

This sequence belongs to the metallothionein superfamily.

Its function is as follows. Metallothioneins are small proteins that have a high content of cysteine residues which allow them to bind heavy metal ions through clusters of thiolate bonds. MymT binds up to seven ions of Cu(+), with a preference for four to six Cu(+) ions, in a solvent-shielded core. MymT protects M.tuberculosis from copper toxicity. The protein is Metallothionein (mymT) of Mycobacterium tuberculosis (strain CDC 1551 / Oshkosh).